A 61-amino-acid chain; its full sequence is Probable tautomerase LL0574 (61 aa).

The active-site Proton acceptor; via imino nitrogen is P2.

Belongs to the 4-oxalocrotonate tautomerase family.

In Lactococcus lactis subsp. lactis (strain IL1403) (Streptococcus lactis), this protein is Probable tautomerase LL0574.